The primary structure comprises 393 residues: Demethylspheroidene O-methyltransferase (393 aa).

A disordered region spans residues 1-36; it reads MPKDDHTGATADRTAQPTGTGKQPLVPGQPGAAPVQ. The span at 26–36 shows a compositional bias: low complexity; that stretch reads VPGQPGAAPVQ. Residues D259 and R297 each coordinate S-adenosyl-L-methionine.

The protein belongs to the class I-like SAM-binding methyltransferase superfamily. Cation-independent O-methyltransferase family.

The catalysed reaction is demethylspheroidene + S-adenosyl-L-methionine = spheroidene + S-adenosyl-L-homocysteine + H(+). It participates in carotenoid biosynthesis; spheroidene biosynthesis. Its function is as follows. Methyltransferase that mediates the O-methylation of 1-hydroxy carotenoids. Converts hydroxyneurosporene to methoxyneurosporene or demethylspheroidene to spheroidene. Also able to produce spirilloxanthin. This is Demethylspheroidene O-methyltransferase (crtF) from Rhodobacter capsulatus (strain ATCC BAA-309 / NBRC 16581 / SB1003).